Consider the following 740-residue polypeptide: MLKLFSAFRKNKIWDFNGGIHPPEMKTQSNGTPLRQVPLAQRFVIPLKQHIGAEGELCVSVGDKVLRGQPLTRGRGKMLPVHAPTSGTVTAIAPHSTAHPSALAELSVIIDADGEDCWIPRDGWDDYRSRSREELIERIHKFGVAGLGGAGFPTGVKLQGGGDKIETLIINAAECEPYITADDRLMQDCAAQVVEGIRILAHILQPREILIGIEDNKPQAISMLRAVLADSHDISLRVIPTKYPSGGAKQLTYILTGKQVPHGGRSSDIGVLMQNVGTAYAVKRAVIDGEPITERVVTLTGEAIARPGNVWARLGTPVRHLLNDAGFCPSADQMVIMGGPLMGFTLPWLDVPVVKITNCLLAPSANELGEPQEEQSCIRCSACADACPADLLPQQLYWFSKGQQHDKATTHNIADCIECGACAWVCPSNIPLVQYFRQEKAEIAAIRQEEKRAAEAKARFEARQARLEREKAARLERHKSAAVQPAAKDKDAIAAALARVKEKQAQATQPIVIKAGERPDNSAIIAAREARKAQARAKQAKLQQTNDAATVADPRKTAVEAAIARAKARKLEQQQANAEPEQQVDPRKAAVEAAIARAKARKLEQQQANAEPEQQVDPRKAAVEAAIARAKARKLEQQQANAEPEQQVDPRKAAVEAAIARAKARKLEQQQANAEPEEQVDPRKAAVEAAIARAKARKLEQKQANAVPEEQVDPRKAAVAAAIARVQAKKAAQQKVVNED.

4Fe-4S ferredoxin-type domains follow at residues 369-397 and 407-436; these read GEPQEEQSCIRCSACADACPADLLPQQLY and KATTHNIADCIECGACAWVCPSNIPLVQYF. 8 residues coordinate [4Fe-4S] cluster: Cys377, Cys380, Cys383, Cys387, Cys416, Cys419, Cys422, and Cys426. A disordered region spans residues 602 to 684; the sequence is KLEQQQANAE…EPEEQVDPRK (83 aa). Low complexity-rich tracts occupy residues 605–615 and 637–647; these read QQQANAEPEQQ.

Belongs to the 4Fe4S bacterial-type ferredoxin family. RnfC subfamily. The complex is composed of six subunits: RsxA, RsxB, RsxC, RsxD, RsxE and RsxG. [4Fe-4S] cluster serves as cofactor.

Its subcellular location is the cell inner membrane. Part of a membrane-bound complex that couples electron transfer with translocation of ions across the membrane. Required to maintain the reduced state of SoxR. This chain is Ion-translocating oxidoreductase complex subunit C, found in Escherichia coli O7:K1 (strain IAI39 / ExPEC).